We begin with the raw amino-acid sequence, 197 residues long: Adenylate kinase (197 aa).

Residue 7-15 coordinates ATP; the sequence is ALPGSGKTT.

The protein belongs to the archaeal adenylate kinase family.

It localises to the cytoplasm. The catalysed reaction is AMP + ATP = 2 ADP. The chain is Adenylate kinase (adkA) from Pyrobaculum aerophilum (strain ATCC 51768 / DSM 7523 / JCM 9630 / CIP 104966 / NBRC 100827 / IM2).